The sequence spans 483 residues: Probable pectate lyase 12 (483 aa).

The signal sequence occupies residues 1-24; the sequence is MMLQRSCIVLFFSLFLLVPQMVFS. Residues Asn-27 and Asn-50 are each glycosylated (N-linked (GlcNAc...) asparagine). Positions 220, 244, and 248 each coordinate Ca(2+). Arg-300 is an active-site residue.

The protein belongs to the polysaccharide lyase 1 family. Ca(2+) is required as a cofactor.

It catalyses the reaction Eliminative cleavage of (1-&gt;4)-alpha-D-galacturonan to give oligosaccharides with 4-deoxy-alpha-D-galact-4-enuronosyl groups at their non-reducing ends.. It functions in the pathway glycan metabolism; pectin degradation; 2-dehydro-3-deoxy-D-gluconate from pectin: step 2/5. The sequence is that of Probable pectate lyase 12 from Arabidopsis thaliana (Mouse-ear cress).